A 41-amino-acid polypeptide reads, in one-letter code: Plantazolicin (41 aa).

Residues 1–27 (MTQIKVPTALIASVHGEGQHLFEPMAA) constitute a propeptide that is removed on maturation. N2,N2-dimethylarginine is present on arginine 28. The thiazole-4-carboxylic acid (Arg-Cys) cross-link spans 28 to 29 (RC). 2 consecutive cross-links (5-methyloxazole-4-carboxylic acid (Cys-Thr)) follow at residues 29-30 (CT) and 31-32 (CT). A cross-link (thiazole-4-carboxylic acid (Thr-Cys)) is located at residues 30-31 (TC). Positions 32-33 (TT) form a cross-link, 5-methyloxazole-4-carboxylic acid (Thr-Thr). The segment at residues 35–36 (IS) is a cross-link (oxazole-4-carboxylic acid (Ile-Ser)). Cross-links (oxazole-4-carboxylic acid (Ser-Ser)) lie at residues 36–37 (SS), 37–38 (SS), and 38–39 (SS). Positions 39 to 40 (ST) form a cross-link, 5-methyloxazoline-4-carboxylic acid (Ser-Thr).

In terms of processing, maturation of thiazole and oxazole containing antibiotics involves the enzymatic condensation of a Cys, Ser or Thr with the alpha-carbonyl of the preceding amino acid to form a thioether or ether bond, then dehydration to form a double bond with the alpha-amino nitrogen. Thiazoline or oxazoline ring are dehydrogenated to form thiazole or oxazole rings. 2 forms exist: plantazolicin A and plantazolicin B. The structural difference between them is a dimethylation at Arg-28 in plantazolicin A.

Its subcellular location is the secreted. It localises to the cell wall. Its function is as follows. Peptide antibiotic inhibiting growth of Gram-positive bacteria in the dimethylated form plantazolicin A. The desmethyl form plantazolicin B has no antibiotic activity. The mode of action appears to be disruption of cell walls and lysis of cells. Inhibits B.subtilis strain HB0042, B.megaterium strain 7A1 and B.anthracis (MIC=2-4 ug/ml). Weakly inhibits Gram-positive bacteria B.brevis strain ATCC 8246, B.subtilis strain 168, B.cereus strain ATCC 14579 and strain CU1065, B.licheniformis strain ATCC 9789, M.luteus, B.sphaericus, P.granivorans and S.pyogenes (MIC=128 ug/ml). Does not inhibit B.pumilus, P.polymyxa, Arthrobacter sp., S.aureus, vancomycin-resistant E.faecalis, L.monocytogenes, methicillin-resistant S.aureus or Gram-negative bacteria E.coli strain K12, K.terrigena, Pseudomonas sp. and E.carotovora. This chain is Plantazolicin, found in Bacillus velezensis (strain DSM 23117 / BGSC 10A6 / LMG 26770 / FZB42) (Bacillus amyloliquefaciens subsp. plantarum).